The chain runs to 374 residues: Ribosomal RNA large subunit methyltransferase G (374 aa).

It belongs to the methyltransferase superfamily. RlmG family.

Its subcellular location is the cytoplasm. The enzyme catalyses guanosine(1835) in 23S rRNA + S-adenosyl-L-methionine = N(2)-methylguanosine(1835) in 23S rRNA + S-adenosyl-L-homocysteine + H(+). Functionally, specifically methylates the guanine in position 1835 (m2G1835) of 23S rRNA. This Pseudomonas putida (strain W619) protein is Ribosomal RNA large subunit methyltransferase G.